Consider the following 230-residue polypeptide: Cytidylate kinase (230 aa).

13 to 21 is an ATP binding site; it reads GPAGTGKSS.

Belongs to the cytidylate kinase family. Type 1 subfamily.

It is found in the cytoplasm. The catalysed reaction is CMP + ATP = CDP + ADP. It catalyses the reaction dCMP + ATP = dCDP + ADP. In Mycobacterium tuberculosis (strain ATCC 25177 / H37Ra), this protein is Cytidylate kinase.